We begin with the raw amino-acid sequence, 384 residues long: Carbazole 1,9a-dioxygenase, terminal oxygenase component CarAa (384 aa).

The Rieske domain maps to 29-135 (WYPVMFSKEI…VQEAKGCVFI (107 aa)). [2Fe-2S] cluster contacts are provided by cysteine 69, histidine 71, cysteine 90, and histidine 93.

In terms of assembly, homotrimer. Carbazole 1,9a-dioxygenase complex consists of a terminal oxygenase component CarAa, a ferredoxin reductase component CarAd and a ferredoxin component CarAc. [2Fe-2S] cluster serves as cofactor.

It carries out the reaction 9H-carbazole + NADH + O2 + H(+) = 2'-aminobiphenyl-2,3-diol + NAD(+). The enzyme catalyses 9H-carbazole + NADPH + O2 + H(+) = 2'-aminobiphenyl-2,3-diol + NADP(+). Its function is as follows. Part of the multicomponent carbazole 1,9a-dioxygenase (CARDO), that converts carbazole (CAR) into 2-aminobiphenyl-2,3-diol. Catalyzes the dioxygenation at the angular (C-9a) and adjacent (C-1) positions of carbazole to yield a highly unstable cis-hydrodiol intermediate which is spontaneously converted to 2-aminobiphenyl-2,3-diol. It is also able to attack the angular position adjacent of hetero atom of heterocyclic aromatic compounds such as polychlorinated dibenzo-p-dioxin (DD) and dibenzofuran (DBF). It was also shown that CARDO has the ability to metabolize biphenyl and polycyclic aromatic hydrocarbons, such as naphthalene and phenanthrene. The protein is Carbazole 1,9a-dioxygenase, terminal oxygenase component CarAa (carAa) of Metapseudomonas resinovorans (Pseudomonas resinovorans).